The primary structure comprises 82 residues: uncharacterized protein (82 aa).

It is found in the plastid. It localises to the chloroplast. This is an uncharacterized protein from Vicia faba (Broad bean).